The primary structure comprises 635 residues: MAGUK p55 subfamily member 4 (635 aa).

Residues 1–16 show a composition bias toward basic and acidic residues; sequence MRQSDRGAELTNEDRA. Residues 1–23 form a disordered region; that stretch reads MRQSDRGAELTNEDRALPTPPDP. L27 domains are found at residues 23–79 and 86–136; these read PENG…EKKL and AQIL…FEPL. In terms of domain architecture, PDZ spans 153-234; the sequence is IVCLVKNQQP…TIMFKVIPVS (82 aa). The region spanning 241–311 is the SH3 domain; it reads QKMVYVRAMI…PSNHLLKRKQ (71 aa). A Guanylate kinase-like domain is found at 426–615; it reads HRLIVLVGPS…ACGQLLSAIQ (190 aa). Residues 567–622 adopt a coiled-coil conformation; it reads VDMKFKDEDLQEMEELAQKMESQFGQFFDHVIVNDNLQDACGQLLSAIQKAQEELQ.

Belongs to the MAGUK family. In terms of assembly, may interact with GRIA2. Interacts with MPDZ. Forms a complex with CRB1 and PALS1. Interacts with FASLG. In terms of tissue distribution, detected in the retina (at protein level). Highly enriched in the retina where it is mainly expressed by rod photoreceptors; detected in the inner segment of the photoreceptor layer and in the outer nuclear layer. Also detected at much lower levels in pineal gland, cerebellum, cortex, hippocampus, olfactory bulb, heart, liver and spleen. Expressed in the CA1-CA3 regions of pyramidal cell layers and in the granule cell layer of dentate gyrus in the hippocampus. In the cerebellum, expressed in Purkinje cells and throughout the granule cell layer. In the olfactory bulb, expressed in mitral cells.

Its subcellular location is the cytoplasm. In terms of biological role, may play a role in retinal photoreceptors development. This is MAGUK p55 subfamily member 4 (Mpp4) from Mus musculus (Mouse).